Reading from the N-terminus, the 365-residue chain is GTPase Obg (365 aa).

The 159-residue stretch at Met-1 to Leu-159 folds into the Obg domain. The 175-residue stretch at Ala-160–Gln-334 folds into the OBG-type G domain. Residues Gly-166–Ser-173, Phe-191–His-195, Asp-213–Gly-216, Asn-284–Asp-287, and Ser-315–Leu-317 contribute to the GTP site. Positions 173 and 193 each coordinate Mg(2+).

Belongs to the TRAFAC class OBG-HflX-like GTPase superfamily. OBG GTPase family. Monomer. The cofactor is Mg(2+).

The protein resides in the cytoplasm. An essential GTPase which binds GTP, GDP and possibly (p)ppGpp with moderate affinity, with high nucleotide exchange rates and a fairly low GTP hydrolysis rate. Plays a role in control of the cell cycle, stress response, ribosome biogenesis and in those bacteria that undergo differentiation, in morphogenesis control. The polypeptide is GTPase Obg (Cupriavidus taiwanensis (strain DSM 17343 / BCRC 17206 / CCUG 44338 / CIP 107171 / LMG 19424 / R1) (Ralstonia taiwanensis (strain LMG 19424))).